Consider the following 510-residue polypeptide: Beta-glucosidase 40 (510 aa).

The signal sequence occupies residues 1–29 (MAHRRLIMTMTKMMMMVTMMMMMDKTCIC). A beta-D-glucoside contacts are provided by residues Gln-51, His-152, and 197-198 (NE). The Proton donor role is filled by Glu-198. Cys-217 and Cys-225 are oxidised to a cystine. N-linked (GlcNAc...) asparagine glycosylation is found at Asn-229 and Asn-278. An a beta-D-glucoside-binding site is contributed by Tyr-341. Asn-349 is a glycosylation site (N-linked (GlcNAc...) asparagine). Residues Glu-414, Trp-464, 471–472 (EW), and Phe-480 each bind a beta-D-glucoside. The Nucleophile role is filled by Glu-414. N-linked (GlcNAc...) asparagine glycosylation is present at Asn-507.

Belongs to the glycosyl hydrolase 1 family.

It carries out the reaction Hydrolysis of terminal, non-reducing beta-D-glucosyl residues with release of beta-D-glucose.. This is Beta-glucosidase 40 from Arabidopsis thaliana (Mouse-ear cress).